A 183-amino-acid chain; its full sequence is Peptidyl-tRNA hydrolase (183 aa).

TRNA is bound at residue tyrosine 14. Residue histidine 19 is the Proton acceptor of the active site. 2 residues coordinate tRNA: tyrosine 55 and asparagine 57.

The protein belongs to the PTH family. In terms of assembly, monomer.

Its subcellular location is the cytoplasm. The catalysed reaction is an N-acyl-L-alpha-aminoacyl-tRNA + H2O = an N-acyl-L-amino acid + a tRNA + H(+). Functionally, hydrolyzes ribosome-free peptidyl-tRNAs (with 1 or more amino acids incorporated), which drop off the ribosome during protein synthesis, or as a result of ribosome stalling. Catalyzes the release of premature peptidyl moieties from peptidyl-tRNA molecules trapped in stalled 50S ribosomal subunits, and thus maintains levels of free tRNAs and 50S ribosomes. The polypeptide is Peptidyl-tRNA hydrolase (Thermus thermophilus (strain ATCC BAA-163 / DSM 7039 / HB27)).